Reading from the N-terminus, the 495-residue chain is Telomere-binding protein subunit alpha (495 aa).

Over residues 1 to 13 (MSTAAKQNRSTSR) the composition is skewed to polar residues. Residues 1–31 (MSTAAKQNRSTSRVSKKKTAAPKEGAAKKSD) form a disordered region.

This sequence belongs to the telombin family. As to quaternary structure, heterodimer of an alpha and a beta subunit.

Its subcellular location is the nucleus. It is found in the chromosome. It localises to the telomere. Its function is as follows. May function as protective capping of the single-stranded telomeric overhang. May also participate in telomere length regulation during DNA replication. Binds specifically to the T4G4-containing extension on the 3'strand and protects this region of the telomere from nuclease digestion and chemical modification. This is Telomere-binding protein subunit alpha (MAC-56A) from Sterkiella nova (Ciliate).